The primary structure comprises 216 residues: Uracil-DNA glycosylase (216 aa).

The active-site Proton acceptor is the D59.

Belongs to the uracil-DNA glycosylase (UDG) superfamily. UNG family.

It is found in the cytoplasm. It carries out the reaction Hydrolyzes single-stranded DNA or mismatched double-stranded DNA and polynucleotides, releasing free uracil.. Functionally, excises uracil residues from the DNA which can arise as a result of misincorporation of dUMP residues by DNA polymerase or due to deamination of cytosine. This Staphylococcus epidermidis (strain ATCC 35984 / DSM 28319 / BCRC 17069 / CCUG 31568 / BM 3577 / RP62A) protein is Uracil-DNA glycosylase.